The sequence spans 325 residues: GTPase Era (325 aa).

In terms of domain architecture, Era-type G spans 30 to 198; it reads HCGFVAIVGR…KKHVRDHLPK (169 aa). The tract at residues 38-45 is G1; it reads GRPNVGKS. 38-45 contacts GTP; it reads GRPNVGKS. Residues 64–68 are G2; it reads QTTRH. The interval 85-88 is G3; it reads DTPG. GTP contacts are provided by residues 85–89 and 147–150; these read DTPGL and NKVD. A G4 region spans residues 147–150; sequence NKVD. Positions 177–179 are G5; sequence ISA. One can recognise a KH type-2 domain in the interval 221–307; it reads VREKLMRFTG…YLETWVKVKS (87 aa).

The protein belongs to the TRAFAC class TrmE-Era-EngA-EngB-Septin-like GTPase superfamily. Era GTPase family. Monomer.

Its subcellular location is the cytoplasm. It is found in the cell inner membrane. Functionally, an essential GTPase that binds both GDP and GTP, with rapid nucleotide exchange. Plays a role in 16S rRNA processing and 30S ribosomal subunit biogenesis and possibly also in cell cycle regulation and energy metabolism. The protein is GTPase Era of Vibrio cholerae serotype O1 (strain ATCC 39315 / El Tor Inaba N16961).